Here is a 526-residue protein sequence, read N- to C-terminus: Protein DETOXIFICATION 43 (526 aa).

The Cytoplasmic segment spans residues 1–36 (MTETGDDLATVKKPIPFLVIFKDLRHVFSRDTTGRE). A helical membrane pass occupies residues 37–57 (ILGIAFPAALALAADPIASLI). Residues 58–59 (DT) are Extracellular-facing. The helical transmembrane segment at 60–80 (AFVGRLGAVQLAAVGVSIAIF) threads the bilayer. At 81–170 (NQASRITIFP…NKKEKRTIRT (90 aa)) the chain is on the cytoplasmic side. The interval 133–166 (ISSPTSNDTNQPQQPPAPDTKSNSGNKSNKKEKR) is disordered. The segment covering 134 to 144 (SSPTSNDTNQP) has biased composition (polar residues). A helical membrane pass occupies residues 171 to 191 (ASTAMILGLILGLVQAIFLIF). The Extracellular portion of the chain corresponds to 192–215 (SSKLLLGVMGVKPNSPMLSPAHKY). A helical transmembrane segment spans residues 216–236 (LSIRALGAPALLLSLAMQGIF). The Cytoplasmic portion of the chain corresponds to 237–244 (RGFKDTKT). The helical transmembrane segment at 245–267 (PLFATVVADVINIVLDPIFIFVL) threads the bilayer. Residues 268 to 270 (RLG) are Extracellular-facing. The chain crosses the membrane as a helical span at residues 271–293 (IIGAAIAHVISQYFMTLILFVFL). Residues 294–316 (AKKVNLIPPNFGDLQFGRFLKNG) are Cytoplasmic-facing. Residues 317–337 (LLLLARTIAVTFCQTLAAAMA) form a helical membrane-spanning segment. At 338–353 (ARLGTTPMAAFQICLQ) the chain is on the extracellular side. A helical transmembrane segment spans residues 354–374 (VWLTSSLLNDGLAVAGQAILA). Topologically, residues 375 to 396 (CSFAEKDYNKVTAVASRVLQMG) are cytoplasmic. Residues 397–417 (FVLGLGLSVFVGLGLYFGAGV) traverse the membrane as a helical segment. Residues 418 to 426 (FSKDPAVIH) are Extracellular-facing. Residues 427 to 447 (LMAIGIPFIAATQPINSLAFV) form a helical membrane-spanning segment. The Cytoplasmic portion of the chain corresponds to 448-457 (LDGVNFGASD). Residues 458–478 (FAYTAYSMVGVAAISIAAVIY) traverse the membrane as a helical segment. The Extracellular segment spans residues 479 to 484 (MAKTNG). Residues 485–505 (FIGIWIALTIYMALRAITGIA) traverse the membrane as a helical segment. The Cytoplasmic portion of the chain corresponds to 506–526 (RMATGTGPWRFLRGRSSSSSS).

The protein belongs to the multi antimicrobial extrusion (MATE) (TC 2.A.66.1) family. As to expression, expressed in roots in the pericycle and cells internal to the pericycle and surrounding the vascular tissue. Also expressed in seed and flower.

Its subcellular location is the cell membrane. Its function is as follows. Citrate transporter responsible for loading citrate into xylem tissues, which helps facilitate iron transport to shoots. Mediates the citrate release in the apoplastic spaces during plant development allowing iron nutrition between symplastically disconnected tissues. The protein is Protein DETOXIFICATION 43 of Arabidopsis thaliana (Mouse-ear cress).